The chain runs to 382 residues: 3-dehydroquinate synthase (382 aa).

Residues 115 to 119, 139 to 140, K152, and K161 contribute to the NAD(+) site; these read GVVGD and TS. Zn(2+) is bound by residues E194, H256, and H274.

The protein belongs to the sugar phosphate cyclases superfamily. Dehydroquinate synthase family. Co(2+) serves as cofactor. The cofactor is Zn(2+). It depends on NAD(+) as a cofactor.

The protein localises to the cytoplasm. It catalyses the reaction 7-phospho-2-dehydro-3-deoxy-D-arabino-heptonate = 3-dehydroquinate + phosphate. It participates in metabolic intermediate biosynthesis; chorismate biosynthesis; chorismate from D-erythrose 4-phosphate and phosphoenolpyruvate: step 2/7. Its function is as follows. Catalyzes the conversion of 3-deoxy-D-arabino-heptulosonate 7-phosphate (DAHP) to dehydroquinate (DHQ). This chain is 3-dehydroquinate synthase, found in Rhodopseudomonas palustris (strain BisB18).